A 182-amino-acid polypeptide reads, in one-letter code: Transcription termination/antitermination protein NusG (182 aa).

The protein belongs to the NusG family.

In terms of biological role, participates in transcription elongation, termination and antitermination. The polypeptide is Transcription termination/antitermination protein NusG (Chlamydia muridarum (strain MoPn / Nigg)).